A 1006-amino-acid chain; its full sequence is Transcription factor tau subunit sfc4 (1006 aa).

Residues 64-91 (GLWSDEESDYEGSDDESNFSKTASRTED) form a disordered region. Residues 66-80 (WSDEESDYEGSDDES) are compositionally biased toward acidic residues. TPR repeat units lie at residues 133–166 (QQMLSLANHLFAQEGNFDEAQKLAEEIVRIDNNV), 205–238 (HELWFTCAKLSESLEFWDQADYCYNRAVSAKPPN), 277–310 (ASILKNLAEIYIKIHAPREILKQFEIAWKYFYQY), 396–429 (HLFRTKLGIARLKTGELPEAELHFSVIKNLPPDY), 431–464 (WGMLYDIAKAYMDIERLDLALEYFVLICNHEPAQ), and 466–499 (IGLWYNMGVCYLELKEYEHAQQCMEAILIVDNSN). A coiled-coil region spans residues 506-554 (LAEINELQDNRDAALEIVTNIFEQRRNINELEREQSQNEDHEKNVGSQL). TPR repeat units follow at residues 841-874 (PVLVLLYGHIMARNRSWIPAINYYSRAFAINPDC) and 924-957 (QEALYNLGKAYHFIGLEHYAVKYYEAVLGLSPMS).

In terms of assembly, component of the TFIIIC complex including sfc1, sfc3, sfc4, sfc6 and sfc7. The subunits are organized in two globular domains, tauA and tauB, connected by a proteolysis-sensitive and flexible linker. Interacts with sfc1, sfc3 and sfc6. Phosphorylated.

It is found in the nucleus. In terms of biological role, TFIIIC mediates tRNA and 5S RNA gene activation by binding to intragenic promoter elements. Upstream of the transcription start site, TFIIIC assembles the initiation complex TFIIIB-TFIIIC-tDNA, which is sufficient for RNA polymerase III recruitment and function. Part of the tauA domain of TFIIIC that binds boxA DNA promoter sites of tRNA and similar genes. Sfc4 is the TFIIIB assembling subunit of TFIIIC. The chain is Transcription factor tau subunit sfc4 from Schizosaccharomyces pombe (strain 972 / ATCC 24843) (Fission yeast).